Here is a 412-residue protein sequence, read N- to C-terminus: MYTCDTCEEDLDLSLDLGETYEELETYGGQYVPLELVKPLEDLDRSYEQLKKDPQFRETFHHILKNYAGRPTPLTEVKNFSRAINGPRIFLKREDLLHTGAHKINNVLGQCLIAKFQGKTRVVAETGAGQHGVALAAAAAYLGMECVIFMGETDINRQKPNVDRIRVLGAEVVSVKRGNSGLKEAVDAAIEDFIFKHDHTHFCIGSALGPYPYPKIVRDFQSVISLEVKSQIKEYTDRDPDILIACVGGGSNAIGFFHHFIPNTKVKLVGVEGGGLGVESGKHAARFATGKPGVVHGFHSYVLQDEDGNCADTYSISAGLDYVSVGPTHAEMHESGRAQYTYATDDEALEAFRLLSKTEGIIPALESSHALAHMIKIAPSLDKDTIAIVNLSGRGDKDLSQIIDLDKRKKHS.

An N6-(pyridoxal phosphate)lysine modification is found at Lys-103.

It belongs to the TrpB family. In terms of assembly, tetramer of two alpha and two beta chains. It depends on pyridoxal 5'-phosphate as a cofactor.

It carries out the reaction (1S,2R)-1-C-(indol-3-yl)glycerol 3-phosphate + L-serine = D-glyceraldehyde 3-phosphate + L-tryptophan + H2O. It functions in the pathway amino-acid biosynthesis; L-tryptophan biosynthesis; L-tryptophan from chorismate: step 5/5. Its function is as follows. The beta subunit is responsible for the synthesis of L-tryptophan from indole and L-serine. This is Tryptophan synthase beta chain 1 (trpB1) from Chlamydia caviae (strain ATCC VR-813 / DSM 19441 / 03DC25 / GPIC) (Chlamydophila caviae).